The following is a 150-amino-acid chain: Large ribosomal subunit protein bL9 (150 aa).

Belongs to the bacterial ribosomal protein bL9 family.

In terms of biological role, binds to the 23S rRNA. The polypeptide is Large ribosomal subunit protein bL9 (Paraburkholderia phymatum (strain DSM 17167 / CIP 108236 / LMG 21445 / STM815) (Burkholderia phymatum)).